Consider the following 96-residue polypeptide: Transmembrane protein PMIS2 (96 aa).

A run of 2 helical transmembrane segments spans residues 31-51 (VMLA…AIYF) and 76-96 (WFNM…VLVL).

Belongs to the CD225/Dispanin family. As to expression, specifically expressed in testis.

The protein localises to the membrane. Its function is as follows. May play a role in spermatozoa mobility. This Mus musculus (Mouse) protein is Transmembrane protein PMIS2.